Consider the following 132-residue polypeptide: Cliotide T2 (132 aa).

The signal sequence occupies residues 1-28; the sequence is MAYVRLTSLAVLFFLAASVMLNVKKTEG. Positions 29–58 form a cross-link, cyclopeptide (Gly-Asn); it reads GEFLKCGESCVQGECYTPGCSCDWPICKKN. Cystine bridges form between Cys-34-Cys-48, Cys-38-Cys-50, and Cys-43-Cys-55. Positions 59–132 are cleaved as a propeptide — removed in mature form; the sequence is HIIATNAKTV…NLKMPMTIIN (74 aa).

Post-translationally, this is a cyclic peptide. In terms of tissue distribution, expressed in flower, stem, shoot and pod but not in root, leaf, seed and nodule (at protein level).

Its function is as follows. Probably participates in a plant defense mechanism. Not active against Gram-negative bacteria E.coli ATCC 700926, K.pneumoniae ATTC 13883 and P.aeruginosa ATCC 39018 at concentration up to 100 uM. Has cytotoxic but no hemolytic activity. The polypeptide is Cliotide T2 (Clitoria ternatea (Butterfly pea)).